The chain runs to 83 residues: MFNMENSAAKGEKAARQLFDLEQDMHDVTKAHEVNANVQSKVQTLTSSLREGASKESFEKQQTLLAGYVALQKVLGRINRKMV.

This sequence belongs to the chlamydial CPn_0711/CT_665/TC_0036 family.

This is an uncharacterized protein from Chlamydia trachomatis serovar D (strain ATCC VR-885 / DSM 19411 / UW-3/Cx).